A 191-amino-acid polypeptide reads, in one-letter code: Threonylcarbamoyl-AMP synthase (191 aa).

One can recognise a YrdC-like domain in the interval P10–R191.

This sequence belongs to the SUA5 family. TsaC subfamily.

The protein resides in the cytoplasm. The enzyme catalyses L-threonine + hydrogencarbonate + ATP = L-threonylcarbamoyladenylate + diphosphate + H2O. In terms of biological role, required for the formation of a threonylcarbamoyl group on adenosine at position 37 (t(6)A37) in tRNAs that read codons beginning with adenine. Catalyzes the conversion of L-threonine, HCO(3)(-)/CO(2) and ATP to give threonylcarbamoyl-AMP (TC-AMP) as the acyladenylate intermediate, with the release of diphosphate. This chain is Threonylcarbamoyl-AMP synthase, found in Halorhodospira halophila (strain DSM 244 / SL1) (Ectothiorhodospira halophila (strain DSM 244 / SL1)).